A 742-amino-acid polypeptide reads, in one-letter code: Phosphatidylinositol 4-phosphate 5-kinase its3 (742 aa).

Disordered regions lie at residues 1–21 and 82–228; these read MKID…IPSY and LFKE…PDIG. Composition is skewed to low complexity over residues 90-105 and 129-142; these read PSNP…SNDS and PSSN…LQNL. Composition is skewed to polar residues over residues 158–181 and 193–218; these read RSSS…SSSQ and EKNS…TSGS. Residues 264–662 form the PIPK domain; sequence GHENYVTAYN…RFYKFVESSI (399 aa). Residues 677 to 742 are disordered; the sequence is QDGQRVNKQQ…RNVTTNTSSS (66 aa). Residues 680–719 show a composition bias toward polar residues; that stretch reads QRVNKQQSVNAGNVRTNNKHGSLNNNTAPSSRNAKSTSAH.

As to quaternary structure, interacts with opy1 (via domain PH 1); the interaction is direct but opy1 does not appear to regulate its3 localization or function. Phosphorylated by casein kinase I. Phosphorylation inactivates the enzyme.

The protein resides in the cell membrane. It catalyses the reaction a 1,2-diacyl-sn-glycero-3-phospho-(1D-myo-inositol 4-phosphate) + ATP = a 1,2-diacyl-sn-glycero-3-phospho-(1D-myo-inositol-4,5-bisphosphate) + ADP + H(+). In terms of biological role, catalyzes the phosphorylation of phosphatidylinositol 4-phosphate on the fifth hydroxyl of the myo-inositol ring, to form phosphatidylinositol 4,5-bisphosphate. Involved, together with the calcineurin ppb1, in cytokinesis. In Schizosaccharomyces pombe (strain 972 / ATCC 24843) (Fission yeast), this protein is Phosphatidylinositol 4-phosphate 5-kinase its3 (its3).